Here is a 603-residue protein sequence, read N- to C-terminus: Protein SHORT-ROOT 2 (603 aa).

Disordered regions lie at residues 11 to 58 (HHHH…HSHS) and 106 to 140 (DFSS…SSAG). Over residues 31–44 (SYPSSRGSTSSPSS) the composition is skewed to low complexity. Residues 45 to 58 (HHTHNHTYYHHSHS) are compositionally biased toward basic residues. Over residues 108–125 (SSSSSSRQFHSGTGAPSS) the composition is skewed to low complexity. The 424-residue stretch at 179-602 (AAPSSSGRWA…QPVVWASAWK (424 aa)) folds into the GRAS domain. The interval 186–249 (RWAAQLLMEC…LTTSGPRTLR (64 aa)) is leucine repeat I (LRI). The tract at residues 268-354 (ALKFQELSPW…DTPHLSITTV (87 aa)) is VHIID. The short motif at 318–322 (LHILD) is the VHIID element. The leucine repeat II (LRII) stretch occupies residues 370 to 406 (EIGQRLEKFARLMGVPFSFRAVHHAGDLADLDLAALD). The tract at residues 416–514 (LAVNCVNALR…ERAVGRAIVD (99 aa)) is PFYRE. The segment at 517–602 (SCPASQSAER…QPVVWASAWK (86 aa)) is SAW.

This sequence belongs to the GRAS family. Does not interact with SCR1.

The protein localises to the nucleus. Putative transcription factor involved in asymmetric cell division. This Oryza sativa subsp. indica (Rice) protein is Protein SHORT-ROOT 2 (SHR2).